A 312-amino-acid polypeptide reads, in one-letter code: Methionyl-tRNA formyltransferase (312 aa).

(6S)-5,6,7,8-tetrahydrofolate is bound at residue 109 to 112; that stretch reads SLLP.

The protein belongs to the Fmt family.

The enzyme catalyses L-methionyl-tRNA(fMet) + (6R)-10-formyltetrahydrofolate = N-formyl-L-methionyl-tRNA(fMet) + (6S)-5,6,7,8-tetrahydrofolate + H(+). Attaches a formyl group to the free amino group of methionyl-tRNA(fMet). The formyl group appears to play a dual role in the initiator identity of N-formylmethionyl-tRNA by promoting its recognition by IF2 and preventing the misappropriation of this tRNA by the elongation apparatus. In Anaeromyxobacter dehalogenans (strain 2CP-C), this protein is Methionyl-tRNA formyltransferase.